The following is a 163-amino-acid chain: NADH-quinone oxidoreductase subunit I (163 aa).

4Fe-4S ferredoxin-type domains follow at residues 54–84 and 94–123; these read LRRY…IESD and TRYD…ETHI. Residues cysteine 64, cysteine 67, cysteine 70, cysteine 74, cysteine 103, cysteine 106, cysteine 109, and cysteine 113 each contribute to the [4Fe-4S] cluster site.

It belongs to the complex I 23 kDa subunit family. In terms of assembly, NDH-1 is composed of 14 different subunits. Subunits NuoA, H, J, K, L, M, N constitute the membrane sector of the complex. [4Fe-4S] cluster is required as a cofactor.

The protein localises to the cell inner membrane. The enzyme catalyses a quinone + NADH + 5 H(+)(in) = a quinol + NAD(+) + 4 H(+)(out). Functionally, NDH-1 shuttles electrons from NADH, via FMN and iron-sulfur (Fe-S) centers, to quinones in the respiratory chain. The immediate electron acceptor for the enzyme in this species is believed to be ubiquinone. Couples the redox reaction to proton translocation (for every two electrons transferred, four hydrogen ions are translocated across the cytoplasmic membrane), and thus conserves the redox energy in a proton gradient. The chain is NADH-quinone oxidoreductase subunit I from Ralstonia nicotianae (strain ATCC BAA-1114 / GMI1000) (Ralstonia solanacearum).